The following is a 686-amino-acid chain: ATP-dependent zinc metalloprotease FTSH 1, chloroplastic (686 aa).

The transit peptide at 1–16 directs the protein to the chloroplast; it reads MAPPCSISSASHLLIT. A helical membrane pass occupies residues 173–193; sequence FLAFVGNLLFPFLAFAGLFFL. 272-279 contacts ATP; that stretch reads GPPGTGKT. His-494 provides a ligand contact to Zn(2+). The active site involves Glu-495. His-498 and Asp-575 together coordinate Zn(2+).

In the N-terminal section; belongs to the AAA ATPase family. It in the C-terminal section; belongs to the peptidase M41 family. Requires Zn(2+) as cofactor.

The protein localises to the plastid. It localises to the chloroplast thylakoid membrane. Its function is as follows. Probable ATP-dependent zinc metallopeptidase. The protein is ATP-dependent zinc metalloprotease FTSH 1, chloroplastic (FTSH1) of Oryza sativa subsp. japonica (Rice).